The primary structure comprises 142 residues: Large ribosomal subunit protein uL11 (142 aa).

It belongs to the universal ribosomal protein uL11 family. Part of the ribosomal stalk of the 50S ribosomal subunit. Interacts with L10 and the large rRNA to form the base of the stalk. L10 forms an elongated spine to which L12 dimers bind in a sequential fashion forming a multimeric L10(L12)X complex. In terms of processing, one or more lysine residues are methylated.

In terms of biological role, forms part of the ribosomal stalk which helps the ribosome interact with GTP-bound translation factors. The chain is Large ribosomal subunit protein uL11 from Klebsiella pneumoniae (strain 342).